The sequence spans 501 residues: MKVGFDHKKYLEEQSKYILERVNNFDKLYLEFGGKLMGDLHAKRVLPGFDENAKIKVLQHMKEKVEVVICVYAGDIERNKIRGDFGITYDMEVLRLIDDLRGYELDVNSVVITRFEGQPATTVFINKLERRGIKVYKHYPTKGYPSDVETIVSDEGYGANEYIETTKPIVVVTAPGPNSGKLGTCLSQLYHENKRGNVVGYSKFETFPVWNVPVKHPLNIAYEAATVDLKDVNMIDSFHLETYGEMSVNYNRDLELFPVLKKIIEKITGKESIFQSPTDMGVNRVGFGIIDDEVIRKASIEEIIRRYFKTACEYKKGQVDKGAYDRMKMIMEELNLKPEDRNVVLPARNYSNKLKESADKNDTCPVVALELEDGTILTGKGSDLMNGTAAVVLNAIKHLANISDDMHLISPVILEPIINLKTKTLASRNVSLSCQEVLTALSICAVTNPTAQFAMEKLALLKGCQAHSTTILNRDDEQTFRKLGIDVTCDPEYPSQNLYYS.

This sequence belongs to the UPF0371 family.

This Clostridioides difficile (strain 630) (Peptoclostridium difficile) protein is UPF0371 protein CD630_08980.